The chain runs to 69 residues: Disintegrin EC6 subunit beta (69 aa).

In terms of domain architecture, Disintegrin spans 1–65 (NSVHPCCDPV…DCPPNPWNGK (65 aa)). Intrachain disulfides connect Cys6–Cys29, Cys20–Cys26, Cys25–Cys50, and Cys38–Cys57. A Cell attachment site motif is present at residues 42-44 (RGD).

It belongs to the venom metalloproteinase (M12B) family. P-II subfamily. P-IIe sub-subfamily. As to quaternary structure, heterodimer with subunit alpha; disulfide-linked. As to expression, expressed by the venom gland.

It is found in the secreted. Functionally, potently inhibits adhesion of alpha-4/beta-1 (ITGA4/ITGB1) and alpha-9/beta-1 (ITGA9/ITGB1) integrins to VCAM1, and adhesion of alpha-5/beta-1 (ITGA5/ITGB1) integrin to fibronectin. Has a much less effect on alpha-IIb/beta-3 (ITGA2B/ITGB3) integrin. Also potently inhibits neutrophil migration across TNF-alpha-activated human umbilical endothelial cells. In Echis carinatus sochureki (Saw-scaled viper), this protein is Disintegrin EC6 subunit beta.